The following is a 59-amino-acid chain: Large ribosomal subunit protein uL30 (59 aa).

It belongs to the universal ribosomal protein uL30 family. As to quaternary structure, part of the 50S ribosomal subunit.

The polypeptide is Large ribosomal subunit protein uL30 (Geobacter metallireducens (strain ATCC 53774 / DSM 7210 / GS-15)).